Reading from the N-terminus, the 271-residue chain is Putative phosphoenolpyruvate synthase regulatory protein (271 aa).

152-159 is an ADP binding site; it reads GASRSGKT.

This sequence belongs to the pyruvate, phosphate/water dikinase regulatory protein family. PSRP subfamily.

It catalyses the reaction [pyruvate, water dikinase] + ADP = [pyruvate, water dikinase]-phosphate + AMP + H(+). The catalysed reaction is [pyruvate, water dikinase]-phosphate + phosphate + H(+) = [pyruvate, water dikinase] + diphosphate. Its function is as follows. Bifunctional serine/threonine kinase and phosphorylase involved in the regulation of the phosphoenolpyruvate synthase (PEPS) by catalyzing its phosphorylation/dephosphorylation. The polypeptide is Putative phosphoenolpyruvate synthase regulatory protein (Marinobacter nauticus (strain ATCC 700491 / DSM 11845 / VT8) (Marinobacter aquaeolei)).